A 525-amino-acid chain; its full sequence is uncharacterized protein (525 aa).

The first 21 residues, methionine 1–alanine 21, serve as a signal peptide directing secretion. Residues alanine 22–arginine 448 lie on the Extracellular side of the membrane. The interval lysine 242–threonine 264 is disordered. Residues isoleucine 449 to tyrosine 469 traverse the membrane as a helical segment. At arginine 470–glutamate 525 the chain is on the cytoplasmic side.

Its subcellular location is the membrane. This is an uncharacterized protein from Saccharomyces cerevisiae (strain ATCC 204508 / S288c) (Baker's yeast).